Here is a 402-residue protein sequence, read N- to C-terminus: mRNA-capping enzyme subunit alpha (402 aa).

Lys-67 functions as the N6-GMP-lysine intermediate in the catalytic mechanism. The disordered stretch occupies residues 374–402; it reads SVTKRKLDETSNDDAPAIKKVAKESEKEI.

This sequence belongs to the eukaryotic GTase family. As to quaternary structure, heterodimer. The mRNA-capping enzyme is composed of two separate chains alpha and beta, respectively a mRNA guanylyltransferase and an mRNA 5'-triphosphate monophosphatase.

It is found in the nucleus. The enzyme catalyses a 5'-end diphospho-ribonucleoside in mRNA + GTP + H(+) = a 5'-end (5'-triphosphoguanosine)-ribonucleoside in mRNA + diphosphate. Second step of mRNA capping. Transfer of the GMP moiety of GTP to the 5'-end of RNA via an enzyme-GMP covalent reaction intermediate. The protein is mRNA-capping enzyme subunit alpha (ceg1) of Schizosaccharomyces pombe (strain 972 / ATCC 24843) (Fission yeast).